We begin with the raw amino-acid sequence, 513 residues long: ATP synthase subunit alpha (513 aa).

169-176 provides a ligand contact to ATP; the sequence is GDRQIGKT.

It belongs to the ATPase alpha/beta chains family. F-type ATPases have 2 components, CF(1) - the catalytic core - and CF(0) - the membrane proton channel. CF(1) has five subunits: alpha(3), beta(3), gamma(1), delta(1), epsilon(1). CF(0) has three main subunits: a(1), b(2) and c(9-12). The alpha and beta chains form an alternating ring which encloses part of the gamma chain. CF(1) is attached to CF(0) by a central stalk formed by the gamma and epsilon chains, while a peripheral stalk is formed by the delta and b chains.

The protein localises to the cell inner membrane. It carries out the reaction ATP + H2O + 4 H(+)(in) = ADP + phosphate + 5 H(+)(out). Functionally, produces ATP from ADP in the presence of a proton gradient across the membrane. The alpha chain is a regulatory subunit. The protein is ATP synthase subunit alpha of Shewanella woodyi (strain ATCC 51908 / MS32).